The sequence spans 371 residues: Nuclear hormone receptor family member nhr-51 (371 aa).

A DNA-binding region (nuclear receptor) is located at residues 2 to 77; sequence NKNCLICHRK…MGMQAFPRRV (76 aa). NR C4-type zinc fingers lie at residues 5–25 and 41–60; these read CLICHRKAAGQHYGVLSCFAC and CQKFNKCYEKFIILPKCKAC. Residues 98–337 enclose the NR LBD domain; sequence MDEQRHWRML…KQLVTDTFVD (240 aa).

It belongs to the nuclear hormone receptor family.

Its subcellular location is the nucleus. Orphan nuclear receptor. In Caenorhabditis elegans, this protein is Nuclear hormone receptor family member nhr-51 (nhr-51).